Consider the following 506-residue polypeptide: Zinc finger protein MAGPIE (506 aa).

A disordered region spans residues 1 to 53 (MTTEDQTISSSGGYVQSSSTTDHVDHHHHDQHESLNPPLVKKKRNLPGNPDPE). Positions 9–21 (SSSGGYVQSSSTT) are enriched in low complexity. Positions 22 to 33 (DHVDHHHHDQHE) are enriched in basic and acidic residues. Ser60 carries the phosphoserine modification. C2H2-type zinc fingers lie at residues 70–92 (FLCEICGKGFQRDQNLQLHRRGH) and 111–141 (YVCPEKSCVHHHPTRALGDLTGIKKHFCRKH). A Nuclear localization signal motif is present at residues 133 to 140 (IKKHFCRK). Residues 146-169 (WKCEKCAKRYAVQSDWKAHSKTCG) form a C2H2-type 2; degenerate zinc finger. Residues Cys148, Cys151, His164, Cys168, Cys175, Cys177, His190, and Cys194 each contribute to the Zn(2+) site. The CCHC-type 2; atypical zinc finger occupies 173–196 (YRCDCGTIFSRRDSFITHRAFCDA). The interval 183–195 (RRDSFITHRAFCD) is SHR-binding.

As to quaternary structure, interacts with SHR, SCR and JKD, but not with itself. Interacts with SIEL. Binds to RGA and SCL3 competitively in the nucleus. As to expression, expressed in the ground tissue and stele cells of embryos and 2-days post-germination roots but not in the quiescent center. Detected only in cells that perform asymmetric cell divisions. In roots, present in cortex, endodermis, and pericycle layer.

It is found in the nucleus. Functionally, transcription factor that regulates tissue boundaries and asymmetric cell division. Contributes to the sequestration of 'SHORT-ROOT' to the nucleus. Interacts with the SCR and MGP promoters. Does not show transcription activity by itself, but regulates the transcription of downstream genes through interaction with other transcription factors. Binds DNA via its zinc fingers. Recognizes and binds to SCL3 promoter sequence 5'-AGACAA-3' to promote its expression when in complex with RGA. Positively involved in gibberellic acid (GA) signaling. This Arabidopsis thaliana (Mouse-ear cress) protein is Zinc finger protein MAGPIE.